The following is a 306-amino-acid chain: Apolipoprotein E (306 aa).

The signal sequence occupies residues 1–18 (MKVLWAVLVVTLLAGCQA). Tandem repeats lie at residues 81–102 (VLME…QELG), 103–124 (PMAE…ARLG), 125–146 (ADME…TMLG), 147–168 (QSAE…KRLL), 169–190 (RDAE…EGAE), 191–212 (RGVS…LRAA), 213–230 (QTSQ…ERLR), and 231–252 (GRLE…EQME). The tract at residues 81–252 (VLMEDTMKEV…RLDVVREQME (172 aa)) is 8 X 22 AA approximate tandem repeats. Met-144 is modified (methionine sulfoxide). Ser-148 is subject to Phosphoserine. Residues 159–169 (HLRKLRKRLLR) are LDL and other lipoprotein receptors binding. Residue 163 to 166 (LRKR) participates in heparin binding. Residues 211–280 (AAQTSQPLRE…GWFEPVVEDM (70 aa)) form a lipid-binding and lipoprotein association region. Residue 226-233 (GERLRGRL) coordinates heparin. A specificity for association with VLDL region spans residues 268–280 (RLKGWFEPVVEDM).

Belongs to the apolipoprotein A1/A4/E family. Homotetramer. May interact with ABCA1; functionally associated with ABCA1 in the biogenesis of HDLs. May interact with APP/A4 amyloid-beta peptide; the interaction is extremely stable in vitro but its physiological significance is unclear. May interact with MAPT. May interact with MAP2. In the cerebrospinal fluid, interacts with secreted SORL1. Interacts with PMEL; this allows the loading of PMEL luminal fragment on ILVs to induce fibril nucleation. In terms of processing, APOE exists as multiple glycosylated and sialylated glycoforms within cells and in plasma. The extent of glycosylation and sialylation are tissue and context specific. Glycated in plasma VLDL. Post-translationally, phosphorylated by FAM20C in the extracellular medium.

It localises to the secreted. The protein localises to the extracellular space. It is found in the extracellular matrix. Its subcellular location is the extracellular vesicle. The protein resides in the endosome. It localises to the multivesicular body. APOE is an apolipoprotein, a protein associating with lipid particles, that mainly functions in lipoprotein-mediated lipid transport between organs via the plasma and interstitial fluids. APOE is a core component of plasma lipoproteins and is involved in their production, conversion and clearance. Apolipoproteins are amphipathic molecules that interact both with lipids of the lipoprotein particle core and the aqueous environment of the plasma. As such, APOE associates with chylomicrons, chylomicron remnants, very low density lipoproteins (VLDL) and intermediate density lipoproteins (IDL) but shows a preferential binding to high-density lipoproteins (HDL). It also binds a wide range of cellular receptors including the LDL receptor/LDLR, the LDL receptor-related proteins LRP1, LRP2 and LRP8 and the very low-density lipoprotein receptor/VLDLR that mediate the cellular uptake of the APOE-containing lipoprotein particles. Finally, APOE also has a heparin-binding activity and binds heparan-sulfate proteoglycans on the surface of cells, a property that supports the capture and the receptor-mediated uptake of APOE-containing lipoproteins by cells. A main function of APOE is to mediate lipoprotein clearance through the uptake of chylomicrons, VLDLs, and HDLs by hepatocytes. APOE is also involved in the biosynthesis by the liver of VLDLs as well as their uptake by peripheral tissues ensuring the delivery of triglycerides and energy storage in muscle, heart and adipose tissues. By participating in the lipoprotein-mediated distribution of lipids among tissues, APOE plays a critical role in plasma and tissues lipid homeostasis. APOE is also involved in two steps of reverse cholesterol transport, the HDLs-mediated transport of cholesterol from peripheral tissues to the liver, and thereby plays an important role in cholesterol homeostasis. First, it is functionally associated with ABCA1 in the biogenesis of HDLs in tissues. Second, it is enriched in circulating HDLs and mediates their uptake by hepatocytes. APOE also plays an important role in lipid transport in the central nervous system, regulating neuron survival and sprouting. The chain is Apolipoprotein E (APOE) from Hystrix brachyura (Malayan porcupine).